We begin with the raw amino-acid sequence, 377 residues long: Queuine tRNA-ribosyltransferase (377 aa).

Aspartate 92 acts as the Proton acceptor in catalysis. Substrate-binding positions include 92-96, aspartate 146, glutamine 190, and glycine 217; that span reads DSGGF. The segment at 248-254 is RNA binding; the sequence is GVGRPED. Aspartate 267 functions as the Nucleophile in the catalytic mechanism. Residues 272-276 form an RNA binding; important for wobble base 34 recognition region; it reads TRHAR. 4 residues coordinate Zn(2+): cysteine 305, cysteine 307, cysteine 310, and histidine 337.

This sequence belongs to the queuine tRNA-ribosyltransferase family. Homodimer. Within each dimer, one monomer is responsible for RNA recognition and catalysis, while the other monomer binds to the replacement base PreQ1. Requires Zn(2+) as cofactor.

The enzyme catalyses 7-aminomethyl-7-carbaguanine + guanosine(34) in tRNA = 7-aminomethyl-7-carbaguanosine(34) in tRNA + guanine. Its pathway is tRNA modification; tRNA-queuosine biosynthesis. Functionally, catalyzes the base-exchange of a guanine (G) residue with the queuine precursor 7-aminomethyl-7-deazaguanine (PreQ1) at position 34 (anticodon wobble position) in tRNAs with GU(N) anticodons (tRNA-Asp, -Asn, -His and -Tyr). Catalysis occurs through a double-displacement mechanism. The nucleophile active site attacks the C1' of nucleotide 34 to detach the guanine base from the RNA, forming a covalent enzyme-RNA intermediate. The proton acceptor active site deprotonates the incoming PreQ1, allowing a nucleophilic attack on the C1' of the ribose to form the product. After dissociation, two additional enzymatic reactions on the tRNA convert PreQ1 to queuine (Q), resulting in the hypermodified nucleoside queuosine (7-(((4,5-cis-dihydroxy-2-cyclopenten-1-yl)amino)methyl)-7-deazaguanosine). The protein is Queuine tRNA-ribosyltransferase of Xylella fastidiosa (strain Temecula1 / ATCC 700964).